The chain runs to 92 residues: Small ribosomal subunit protein uS15c (92 aa).

This sequence belongs to the universal ribosomal protein uS15 family. Part of the 30S ribosomal subunit.

The protein localises to the plastid. It is found in the chloroplast. This is Small ribosomal subunit protein uS15c (rps15) from Guizotia abyssinica (Niger).